Here is a 983-residue protein sequence, read N- to C-terminus: Probable beta-galactosidase C (983 aa).

Residues 1-23 form the signal peptide; the sequence is MRIFSFLFLLLLGILTGQGLVSG. Residues Tyr82, Asn127, Ala128, Glu129, and Asn187 each contribute to the substrate site. Glu188 serves as the catalytic Proton donor. Asn197 carries N-linked (GlcNAc...) asparagine glycosylation. Substrate is bound at residue Tyr251. The cysteines at positions 257 and 304 are disulfide-linked. Asn276 is a glycosylation site (N-linked (GlcNAc...) asparagine). Residue Glu287 is the Nucleophile of the active site. Tyr353 provides a ligand contact to substrate. N-linked (GlcNAc...) asparagine glycosylation is found at Asn391, Asn434, Asn466, Asn516, Asn601, Asn676, Asn714, Asn719, and Asn804.

It belongs to the glycosyl hydrolase 35 family.

Its subcellular location is the secreted. The catalysed reaction is Hydrolysis of terminal non-reducing beta-D-galactose residues in beta-D-galactosides.. Its function is as follows. Cleaves beta-linked terminal galactosyl residues from gangliosides, glycoproteins, and glycosaminoglycans. The chain is Probable beta-galactosidase C (lacC) from Neosartorya fischeri (strain ATCC 1020 / DSM 3700 / CBS 544.65 / FGSC A1164 / JCM 1740 / NRRL 181 / WB 181) (Aspergillus fischerianus).